The primary structure comprises 477 residues: Glycogen synthase (477 aa).

Lys-15 is an ADP-alpha-D-glucose binding site.

It belongs to the glycosyltransferase 1 family. Bacterial/plant glycogen synthase subfamily.

It catalyses the reaction [(1-&gt;4)-alpha-D-glucosyl](n) + ADP-alpha-D-glucose = [(1-&gt;4)-alpha-D-glucosyl](n+1) + ADP + H(+). It participates in glycan biosynthesis; glycogen biosynthesis. Synthesizes alpha-1,4-glucan chains using ADP-glucose. In Cronobacter sakazakii (strain ATCC BAA-894) (Enterobacter sakazakii), this protein is Glycogen synthase.